The following is a 1601-amino-acid chain: Polycomb group protein Psc (1601 aa).

Disordered regions lie at residues 1–91 (MMTP…TTTT) and 165–245 (NGIK…DLAT). 2 stretches are compositionally biased toward low complexity: residues 8 to 91 (AIQP…TTTT) and 182 to 198 (SSSSSSSSSSSSSSSSS). Over residues 199–215 (WPTTRRATSEDASSNGG) the composition is skewed to polar residues. Residues 228-245 (TAAVAASSTATTTSDLAT) show a composition bias toward low complexity. The RING-type zinc finger occupies 263-302 (CHLCQGYLINATTIVECLHSFCHSCLINHLRKERFCPRCE). 7 disordered regions span residues 561–693 (KREK…FSED), 711–856 (VESP…NRTP), 895–960 (IGGG…SNNY), 1011–1097 (YKYT…EKQQ), 1116–1315 (SITI…LAPK), 1330–1408 (NPAA…HPVM), and 1512–1601 (AATG…TKSK). A compositionally biased stretch (low complexity) spans 567–590 (SPQMSSKSSSKSSPCTPVSSPSEP). The segment covering 611 to 637 (DPERREIVKPLKPEKESRSKKKDKDGS) has biased composition (basic and acidic residues). Over residues 638-649 (PKSSSSSSSSSS) the composition is skewed to low complexity. A phosphoserine mark is found at serine 656 and serine 658. A compositionally biased stretch (polar residues) spans 676–689 (SGVSTLSPRVTSGA). Over residues 729 to 739 (SVQQSASPKSK) the composition is skewed to low complexity. Over residues 812 to 822 (LMPPPAKPPML) the composition is skewed to pro residues. Residues 929 to 938 (TTPSQGNKNV) are compositionally biased toward polar residues. Residues 1011-1022 (YKYTPKPTPNSG) are compositionally biased toward low complexity. Gly residues predominate over residues 1036-1045 (LGGGNGGSLG). Residues 1069–1085 (SSATQSGGNNGIVNNNI) show a composition bias toward low complexity. A compositionally biased stretch (polar residues) spans 1116 to 1133 (SITISRDNGDSSSPNNGQ). The residue at position 1139 (serine 1139) is a Phosphoserine. Pro residues predominate over residues 1204 to 1217 (PQLPKVATPPPPSS). 3 positions are modified to phosphothreonine: threonine 1222, threonine 1236, and threonine 1251. The segment covering 1247-1258 (VDKKTPSPEKRT) has biased composition (basic and acidic residues). Residues serine 1253, serine 1266, and serine 1274 each carry the phosphoserine modification. The segment covering 1261–1272 (QMGSHSPTASEN) has biased composition (polar residues). Composition is skewed to polar residues over residues 1352-1375 (QSGQQKLVNGGQSQPAQQKTSPPA) and 1561-1587 (APQTKGNSSSGAANARQQTAATGNNGA).

Component of PRC1 complex, which contains many PcG proteins like Pc, ph, Scm, Psc, Sce and also chromatin-remodeling proteins such as histone deacetylases. This complex is distinct from the Esc/E(z) complex, at least composed of esc, E(z), Su(z)12, HDAC1/Rpd3 and Caf1-55. The 2 complexes however cooperate and interact together during the first 3 hours of development to establish PcG silencing.

The protein resides in the nucleus. In terms of biological role, polycomb group (PcG) protein. PcG proteins act by forming multiprotein complexes, which are required to maintain the transcriptionally repressive state of homeotic genes throughout development. PcG proteins are not required to initiate repression, but to maintain it during later stages of development. Component of the PcG multiprotein PRC1 complex, a complex that acts via chromatin remodeling and modification of histones; it mediates monoubiquitination of histone H2A 'Lys-118', rendering chromatin heritably changed in its expressibility. Needed to maintain expression patterns of the homeotic selector genes of the Antennapedia (Antp-C) and Bithorax (BX-C) complexes, and hence for the maintenance of segmental determination. The protein is Polycomb group protein Psc (Psc) of Drosophila melanogaster (Fruit fly).